The sequence spans 150 residues: Small ribosomal subunit protein eS6 (150 aa).

The protein belongs to the eukaryotic ribosomal protein eS6 family.

In Caldivirga maquilingensis (strain ATCC 700844 / DSM 13496 / JCM 10307 / IC-167), this protein is Small ribosomal subunit protein eS6.